The primary structure comprises 685 residues: MGQEKLYIEKELSWLAFNERVLQEAADKSNPLIERMRFLGIYSNNLDEFYKVRFAELKRRIIISEEQGLNSHSRHLLGKIQSRVLKADQEFDGLYNELLLEMARNQIFLINERQLSVNQQNWLRHYFKHYLRQHITPILINRETDLVQFLKDDYTYLAVEIIRGESIRYPLLEIPSDKVPRFVNLPPETPRRRKPMILLDNILRYCLDDIFKGFFDYDALNAYSMKMTRDAEYDLVHEMEASLMELMSSSLKQPDAEPVRFVYQRDMPDAMVEMLRDKLTISRYDSIVPGGRYHNFKDFIGFPNVGKANLVNKPLPRLRHLWFDKFRNGFDAIRERDVLLYYPYHTFEHVLELLRQASFDPSVLAIKINIYRVAKDSRIIDAMIHAAHNAKKVTVVVELQARFDEEANIHWARRLTEAGVHVIFSAPGLKIHAKLFLISRKEGDDVVRYAHIGTGNFNEKTSLIYTDYSLLTADARITNEVRRVFNFIENPYRPVSFDYLLVSPQNSRRLLYDMIDKEIANAQKGLSSGITLKLNNLVDKGLVDRLYAASSSGVPVNLLIRGMCSLIPELEGISDNIRVISIVDRYLEHDRIYIFDNAGDKQVYLSSADWMTRNIDYRIEVAAPLLDPRLKQQILDIIEILFSDTVKARYIDKELSNRYVPRGNRRKVRSQLAIYDYIKSLEQPD.

ATP is bound at residue Asn-45. The Mg(2+) site is built by Arg-372 and Arg-402. One can recognise a PLD phosphodiesterase 1 domain in the interval 427-461 (PGLKIHAKLFLISRKEGDDVVRYAHIGTGNFNEKT). The active-site Phosphohistidine intermediate is the His-432. The ATP site is built by Tyr-465, Arg-561, and His-589. Positions 584–614 (DRYLEHDRIYIFDNAGDKQVYLSSADWMTRN) constitute a PLD phosphodiesterase 2 domain.

This sequence belongs to the polyphosphate kinase 1 (PPK1) family. Mg(2+) serves as cofactor. An intermediate of this reaction is the autophosphorylated ppk in which a phosphate is covalently linked to a histidine residue through a N-P bond.

It carries out the reaction [phosphate](n) + ATP = [phosphate](n+1) + ADP. Functionally, catalyzes the reversible transfer of the terminal phosphate of ATP to form a long-chain polyphosphate (polyP). This is Polyphosphate kinase from Klebsiella pneumoniae.